Consider the following 209-residue polypeptide: Uracil phosphoribosyltransferase (209 aa).

Residues Arg79, Arg104, and Asp131–Thr139 each bind 5-phospho-alpha-D-ribose 1-diphosphate. Uracil-binding positions include Ile194 and Gly199–Ala201. Asp200 contacts 5-phospho-alpha-D-ribose 1-diphosphate.

This sequence belongs to the UPRTase family. Mg(2+) serves as cofactor.

The catalysed reaction is UMP + diphosphate = 5-phospho-alpha-D-ribose 1-diphosphate + uracil. Its pathway is pyrimidine metabolism; UMP biosynthesis via salvage pathway; UMP from uracil: step 1/1. With respect to regulation, allosterically activated by GTP. In terms of biological role, catalyzes the conversion of uracil and 5-phospho-alpha-D-ribose 1-diphosphate (PRPP) to UMP and diphosphate. This is Uracil phosphoribosyltransferase from Pseudoalteromonas atlantica (strain T6c / ATCC BAA-1087).